The chain runs to 658 residues: Exoribonuclease 2 (658 aa).

Residues 189-530 (REDLTSLYFT…VNHRLIKQVL (342 aa)) enclose the RNB domain. The S1 motif domain occupies 576–658 (AVEFDCEIAD…ETRSIVGNII (83 aa)).

The protein belongs to the RNR ribonuclease family. RNase II subfamily.

Its subcellular location is the cytoplasm. It catalyses the reaction Exonucleolytic cleavage in the 3'- to 5'-direction to yield nucleoside 5'-phosphates.. Its function is as follows. Involved in mRNA degradation. Hydrolyzes single-stranded polyribonucleotides processively in the 3' to 5' direction. The protein is Exoribonuclease 2 of Actinobacillus pleuropneumoniae serotype 3 (strain JL03).